Consider the following 248-residue polypeptide: 4-hydroxy-tetrahydrodipicolinate reductase (248 aa).

NAD(+) is bound by residues aspartate 32, 74–76 (GTT), and 99–102 (SANF). Histidine 134 (proton donor/acceptor) is an active-site residue. Histidine 135 is a (S)-2,3,4,5-tetrahydrodipicolinate binding site. The active-site Proton donor is lysine 138. (S)-2,3,4,5-tetrahydrodipicolinate is bound at residue 144–145 (GT).

Belongs to the DapB family.

The protein resides in the cytoplasm. It catalyses the reaction (S)-2,3,4,5-tetrahydrodipicolinate + NAD(+) + H2O = (2S,4S)-4-hydroxy-2,3,4,5-tetrahydrodipicolinate + NADH + H(+). The catalysed reaction is (S)-2,3,4,5-tetrahydrodipicolinate + NADP(+) + H2O = (2S,4S)-4-hydroxy-2,3,4,5-tetrahydrodipicolinate + NADPH + H(+). The protein operates within amino-acid biosynthesis; L-lysine biosynthesis via DAP pathway; (S)-tetrahydrodipicolinate from L-aspartate: step 4/4. Its function is as follows. Catalyzes the conversion of 4-hydroxy-tetrahydrodipicolinate (HTPA) to tetrahydrodipicolinate. In Pelodictyon phaeoclathratiforme (strain DSM 5477 / BU-1), this protein is 4-hydroxy-tetrahydrodipicolinate reductase.